A 299-amino-acid polypeptide reads, in one-letter code: Prolyl 4-hydroxylase 2 (299 aa).

Over 1-5 (MSMSR) the chain is Cytoplasmic. The helical; Signal-anchor for type II membrane protein transmembrane segment at 6 to 26 (LGLLLFVAILLVLLQSSTCLI) threads the bilayer. Topologically, residues 27–299 (SSPSSIINPS…GNCRRSCKAC (273 aa)) are lumenal. Residues 121–246 (NGEDLQVLRY…KWSATKWIHV (126 aa)) enclose the Fe2OG dioxygenase domain. Fe cation-binding residues include His-139 and Asp-141. A glycan (N-linked (GlcNAc...) asparagine) is linked at Asn-165. His-227 contacts Fe cation. Residue Lys-237 participates in 2-oxoglutarate binding. Asn-258 and Asn-263 each carry an N-linked (GlcNAc...) asparagine glycan. Residues 259–299 (CTDVNESCERWAVLGECGKNPEYMVGTPEIPGNCRRSCKAC) form the ShKT domain. 3 disulfides stabilise this stretch: Cys-259/Cys-299, Cys-266/Cys-292, and Cys-275/Cys-296.

The protein belongs to the P4HA family. The cofactor is Fe(2+). It depends on L-ascorbate as a cofactor. Expressed in epidermal root hair cells (trichoblasts).

The protein resides in the endoplasmic reticulum membrane. Its subcellular location is the golgi apparatus membrane. The enzyme catalyses L-prolyl-[collagen] + 2-oxoglutarate + O2 = trans-4-hydroxy-L-prolyl-[collagen] + succinate + CO2. Functionally, catalyzes the post-translational formation of 4-hydroxyproline in -Xaa-Pro-Gly- sequences in proline-rich peptide sequences of plant glycoproteins and other proteins. Hydroxyprolines are important constituent of many plant cell wall glycoproteins such as extensins, hydroxyproline-rich glycoproteins, lectins and arabinogalactan proteins. Possesses high affinity for leucine-rich repeat and proline-rich extensins of root cell walls that are essential for root hair development. Hydroxyprolines define the subsequent O-glycosylation sites by arabinosyltransferases which elongate the O-arabinosides on extensins. Has low affinity for the substrates tested in vitro. The polypeptide is Prolyl 4-hydroxylase 2 (Arabidopsis thaliana (Mouse-ear cress)).